A 344-amino-acid polypeptide reads, in one-letter code: Protein pelota homolog (344 aa).

Belongs to the eukaryotic release factor 1 family. Pelota subfamily. As to quaternary structure, monomer. The cofactor is a divalent metal cation.

The protein resides in the cytoplasm. In terms of biological role, may function in recognizing stalled ribosomes, interact with stem-loop structures in stalled mRNA molecules, and effect endonucleolytic cleavage of the mRNA. May play a role in the release non-functional ribosomes and degradation of damaged mRNAs. Has endoribonuclease activity. This is Protein pelota homolog from Saccharolobus islandicus (strain M.14.25 / Kamchatka #1) (Sulfolobus islandicus).